We begin with the raw amino-acid sequence, 328 residues long: Tetraacyldisaccharide 4'-kinase (328 aa).

55–62 lines the ATP pocket; it reads TAGGNGKT.

Belongs to the LpxK family.

It carries out the reaction a lipid A disaccharide + ATP = a lipid IVA + ADP + H(+). It participates in glycolipid biosynthesis; lipid IV(A) biosynthesis; lipid IV(A) from (3R)-3-hydroxytetradecanoyl-[acyl-carrier-protein] and UDP-N-acetyl-alpha-D-glucosamine: step 6/6. Transfers the gamma-phosphate of ATP to the 4'-position of a tetraacyldisaccharide 1-phosphate intermediate (termed DS-1-P) to form tetraacyldisaccharide 1,4'-bis-phosphate (lipid IVA). The polypeptide is Tetraacyldisaccharide 4'-kinase (Yersinia enterocolitica serotype O:8 / biotype 1B (strain NCTC 13174 / 8081)).